The primary structure comprises 246 residues: Mast cell protease 1 (246 aa).

An N-terminal signal peptide occupies residues methionine 1–alanine 18. The propeptide at glutamate 19–glutamate 20 is activation peptide. One can recognise a Peptidase S1 domain in the interval isoleucine 21–arginine 244. Cysteines 50 and 66 form a disulfide. Residues histidine 65 and aspartate 109 each act as charge relay system in the active site. 2 disulfides stabilise this stretch: cysteine 143-cysteine 208 and cysteine 174-cysteine 187. Serine 202 functions as the Charge relay system in the catalytic mechanism.

The protein belongs to the peptidase S1 family. Granzyme subfamily.

This is Mast cell protease 1 from Meriones unguiculatus (Mongolian jird).